We begin with the raw amino-acid sequence, 429 residues long: Guanine nucleotide-binding protein subunit alpha (429 aa).

A lipid anchor (N-myristoyl glycine) is attached at Gly2. The S-palmitoyl cysteine moiety is linked to residue Cys3. The G-alpha domain occupies 40–429 (KGVKLLLLGA…QQNLKKSGIM (390 aa)). A G1 motif region spans residues 43–56 (KLLLLGAGESGKST). Residues Glu51, Ser52, Gly53, Lys54, Ser55, and Thr56 each contribute to the GTP site. Residue Ser55 participates in Mg(2+) binding. A not present in other G-proteins region spans residues 125–197 (LKQIDADVAG…KDSEQFTRLS (73 aa)). The interval 249–257 (DILKGRIKT) is G2 motif. GTP contacts are provided by Leu251, Thr257, Gly279, Asn345, Lys346, Asp348, and Ala401. A Mg(2+)-binding site is contributed by Thr257. Residues 272 to 281 (FKVLDAGGQR) are G3 motif. A G4 motif region spans residues 341–348 (ILFLNKID). Positions 399–404 (TCATDS) are G5 motif.

The protein belongs to the G-alpha family. G(q) subfamily. G proteins are composed of 3 units; alpha, beta and gamma. The alpha chain contains the guanine nucleotide binding site. It depends on Mg(2+) as a cofactor.

Functionally, guanine nucleotide-binding proteins (G proteins) are involved as modulators or transducers in various transmembrane signaling systems. Involved in the mating pathway. The sequence is that of Guanine nucleotide-binding protein subunit alpha (CAG1) from Candida albicans (strain WO-1) (Yeast).